We begin with the raw amino-acid sequence, 217 residues long: 3-demethoxyubiquinol 3-hydroxylase (217 aa).

6 residues coordinate Fe cation: glutamate 66, glutamate 96, histidine 99, glutamate 148, glutamate 180, and histidine 183.

Belongs to the COQ7 family. Fe cation is required as a cofactor.

Its subcellular location is the cell membrane. It catalyses the reaction a 5-methoxy-2-methyl-3-(all-trans-polyprenyl)benzene-1,4-diol + AH2 + O2 = a 3-demethylubiquinol + A + H2O. Its pathway is cofactor biosynthesis; ubiquinone biosynthesis. Catalyzes the hydroxylation of 2-nonaprenyl-3-methyl-6-methoxy-1,4-benzoquinol during ubiquinone biosynthesis. This Xanthomonas oryzae pv. oryzae (strain MAFF 311018) protein is 3-demethoxyubiquinol 3-hydroxylase.